The primary structure comprises 273 residues: MSTYQPEDTRKVTTHRLIEMKSRGEKISMLTAYDYSMAKLVDEAGMDVILVGDSASNVMAGNVTTLPITLDQMIYHGKSVVKAVKRALVVVDLPFGSYQGNSKEALCSAIRVMKETHADCIKLEGGEEVRESIVRILSAGIPIMGHLGLMPQSINKFGTYNVRAKEEAEAEKLLQDAHLLEELGCFALVLEKIPAELATRVASELSIPVIGIGAGGGVDGQVLVMHDMLGITEGFSPRFLRRYANLANEIDRALKHYIADVKSMDFPNKDEQY.

Positions 53 and 92 each coordinate Mg(2+). Residues 53 to 54 (DS), Asp-92, and Lys-122 each bind 3-methyl-2-oxobutanoate. A Mg(2+)-binding site is contributed by Glu-124. Residue Glu-191 is the Proton acceptor of the active site.

It belongs to the PanB family. In terms of assembly, homodecamer; pentamer of dimers. Mg(2+) is required as a cofactor.

Its subcellular location is the cytoplasm. The enzyme catalyses 3-methyl-2-oxobutanoate + (6R)-5,10-methylene-5,6,7,8-tetrahydrofolate + H2O = 2-dehydropantoate + (6S)-5,6,7,8-tetrahydrofolate. Its pathway is cofactor biosynthesis; (R)-pantothenate biosynthesis; (R)-pantoate from 3-methyl-2-oxobutanoate: step 1/2. In terms of biological role, catalyzes the reversible reaction in which hydroxymethyl group from 5,10-methylenetetrahydrofolate is transferred onto alpha-ketoisovalerate to form ketopantoate. The protein is 3-methyl-2-oxobutanoate hydroxymethyltransferase of Porphyromonas gingivalis (strain ATCC 33277 / DSM 20709 / CIP 103683 / JCM 12257 / NCTC 11834 / 2561).